The sequence spans 491 residues: Peptidoglycan D,D-transpeptidase PbpA (491 aa).

The Cytoplasmic portion of the chain corresponds to 1-8 (MNTSLRRV). The chain crosses the membrane as a helical; Signal-anchor for type II membrane protein span at residues 9-29 (AVAIMVLIVLLLANATVTQVF). At 30–491 (AADGLRADPR…TIAAALREGS (462 aa)) the chain is on the periplasmic side. Residues 160-484 (GSVVALEPST…AAPIGRATIA (325 aa)) are transpeptidase. The Acyl-ester intermediate role is filled by Ser222.

The protein belongs to the transpeptidase family.

The protein resides in the cell inner membrane. The catalysed reaction is Preferential cleavage: (Ac)2-L-Lys-D-Ala-|-D-Ala. Also transpeptidation of peptidyl-alanyl moieties that are N-acyl substituents of D-alanine.. The protein operates within cell wall biogenesis; peptidoglycan biosynthesis. In terms of biological role, transpeptidase that catalyzes cross-linking of the peptidoglycan cell wall. Required for the regulation of cell length. This Mycolicibacterium smegmatis (strain ATCC 700084 / mc(2)155) (Mycobacterium smegmatis) protein is Peptidoglycan D,D-transpeptidase PbpA (pbpA).